A 1823-amino-acid polypeptide reads, in one-letter code: Bromodomain-containing protein DDB_G0280777 (1823 aa).

Disordered regions lie at residues 44 to 83 (DNNN…EEDE) and 200 to 281 (LKQT…RTTS). Residues 65–77 (SNKEEEKEEKEEK) show a composition bias toward basic and acidic residues. The span at 210–224 (KRRNQQHQNLLKKQK) shows a compositional bias: basic residues. Positions 225-250 (IQKEKEEREQKEKEQKEKEQKEKEEQ) are enriched in basic and acidic residues. Low complexity predominate over residues 251 to 262 (QQQLFLLQQQQQ). The region spanning 306–413 (EAQEEMYDQL…KKSKDLMKNV (108 aa)) is the Bromo domain. 8 disordered regions span residues 429–654 (ENKN…EEQT), 753–781 (NCNN…NNSL), 855–886 (INDN…NNKP), 949–993 (NSSK…DEDF), 1055–1079 (LPNN…PPPS), 1190–1386 (IDPK…IQAS), 1453–1477 (QLQQ…QTPQ), and 1679–1823 (QQQQ…QKKQ). Composition is skewed to low complexity over residues 432–486 (NNNN…NTPL), 494–511 (CSPS…TPQS), 520–555 (QQQQ…ISPR), and 570–579 (SSSSLSSSSL). Polar residues predominate over residues 580–590 (ALNSQNENGVN). Residues 601–614 (MESEESTNVKKEEN) are compositionally biased toward basic and acidic residues. A compositionally biased stretch (acidic residues) spans 631-643 (EGEEQQEQEDEEQ). Composition is skewed to low complexity over residues 753–779 (NCNN…NNNN), 863–884 (NNNN…NNNN), 949–958 (NSSKSNNNSN), 1055–1071 (LPNN…TTQL), and 1205–1378 (NNNN…NNNN). Over residues 1679–1705 (QQQQPQQQQQQPQQQPQQQPQQQQQPQ) the composition is skewed to low complexity. Composition is skewed to basic and acidic residues over residues 1716–1737 (PKEK…EKDR) and 1744–1755 (KTESKKESKKSL). Composition is skewed to low complexity over residues 1756 to 1767 (NDSSNSDINTSV) and 1789 to 1806 (SSKQ…TQDS). Positions 1813–1823 (KKKRGRPQKKQ) are enriched in basic residues.

The polypeptide is Bromodomain-containing protein DDB_G0280777 (Dictyostelium discoideum (Social amoeba)).